Consider the following 359-residue polypeptide: Putative cyclin-F1-2 (359 aa).

Belongs to the cyclin family. Cyclin F subfamily.

The sequence is that of Putative cyclin-F1-2 (CYCF1-2) from Oryza sativa subsp. japonica (Rice).